Reading from the N-terminus, the 326-residue chain is tRNA-modifying protein YgfZ (326 aa).

Residues tryptophan 27 and tryptophan 189 each contribute to the folate site.

Belongs to the tRNA-modifying YgfZ family.

The protein localises to the cytoplasm. Its function is as follows. Folate-binding protein involved in regulating the level of ATP-DnaA and in the modification of some tRNAs. It is probably a key factor in regulatory networks that act via tRNA modification, such as initiation of chromosomal replication. The protein is tRNA-modifying protein YgfZ of Salmonella arizonae (strain ATCC BAA-731 / CDC346-86 / RSK2980).